The chain runs to 276 residues: NADPH-dependent 7-cyano-7-deazaguanine reductase (276 aa).

Position 83-85 (83-85) interacts with substrate; it reads IES. 85–86 lines the NADPH pocket; it reads SK. The active-site Thioimide intermediate is cysteine 184. Residue aspartate 191 is the Proton donor of the active site. 223-224 is a substrate binding site; that stretch reads HE. 252–253 serves as a coordination point for NADPH; the sequence is RG.

The protein belongs to the GTP cyclohydrolase I family. QueF type 2 subfamily. As to quaternary structure, homodimer.

It localises to the cytoplasm. The enzyme catalyses 7-aminomethyl-7-carbaguanine + 2 NADP(+) = 7-cyano-7-deazaguanine + 2 NADPH + 3 H(+). It participates in tRNA modification; tRNA-queuosine biosynthesis. Functionally, catalyzes the NADPH-dependent reduction of 7-cyano-7-deazaguanine (preQ0) to 7-aminomethyl-7-deazaguanine (preQ1). The chain is NADPH-dependent 7-cyano-7-deazaguanine reductase from Pseudomonas putida (strain ATCC 700007 / DSM 6899 / JCM 31910 / BCRC 17059 / LMG 24140 / F1).